A 502-amino-acid chain; its full sequence is MSIKAEEISTLIKQQIQNYQSDIEVQDVGTVIQVGDGIARVHGLDNCMAGELVEFSNGVLGMAQNLEESNVGIVILGPFSEIREGDEVKRTGRIMEVPVGEELIGRIVNPLGQPVDGLGPILTSKTRPIESPAPGVMDRKSVHEPLQTGIKAIDALIPIGRGQRELIIGDRQTGKTSVAIDAILNQKDQDMICVYVAIGQKESTVRGVVETLRKHGALDYTIVVTASASQPAPLLYLAPYAGVTMAEEFMYNGKHVLVVYDDLSKQAAAYRELSLLLRRPPGREAFPGDVFYLHSRLLERAAKLSDAKGAGSITALPFVETQAGDISAYIPTNVISITDGQIFLQSDLFFSGVRPAINAGLSVSRVGGSAQIKAMKKVSGTLRLDLASYRELEAFAQFGSDLDQATQAKLNRGARTVEVLKQDLNKPLPVEKQVAILYALTKGYLDDIPVADIRRFEEEYYMYLDQNHKDLLDGIAKTGNLPADEDFKAAIEGFKRTFAPSN.

169-176 contributes to the ATP binding site; the sequence is GDRQTGKT.

Belongs to the ATPase alpha/beta chains family. F-type ATPases have 2 components, CF(1) - the catalytic core - and CF(0) - the membrane proton channel. CF(1) has five subunits: alpha(3), beta(3), gamma(1), delta(1), epsilon(1). CF(0) has three main subunits: a(1), b(2) and c(9-12). The alpha and beta chains form an alternating ring which encloses part of the gamma chain. CF(1) is attached to CF(0) by a central stalk formed by the gamma and epsilon chains, while a peripheral stalk is formed by the delta and b chains. The F(1)F(0) complex interacts with SpoIIIJ and YqjG; YqgA is found in the same complex.

The protein localises to the cell membrane. It localises to the membrane raft. The catalysed reaction is ATP + H2O + 4 H(+)(in) = ADP + phosphate + 5 H(+)(out). Its function is as follows. Produces ATP from ADP in the presence of a proton gradient across the membrane. The alpha chain is a regulatory subunit. In Bacillus subtilis (strain 168), this protein is ATP synthase subunit alpha.